The following is a 382-amino-acid chain: Cytochrome b (382 aa).

4 consecutive transmembrane segments (helical) span residues 36-56 (FGSLLALCLMIQILTGLFLTM), 80-101 (WLIRTIHANGASFFFICIYLHI), 116-136 (WFIGVIILFMLMATAFMGYVL), and 181-201 (FYTFHFLLPFIILMLTMIHLL). Heme b contacts are provided by His-86 and His-100. Heme b-binding residues include His-185 and His-199. His-204 contributes to the a ubiquinone binding site. 4 helical membrane passes run 229–249 (YKDLIGFLILMMLLLMLTLSN), 291–311 (LGGVIALVMSILILIILPLTF), 323–343 (INQFMFWIFVMMVILLTWIGA), and 350–370 (YIITGQLLTILYFLYFILNPL).

The protein belongs to the cytochrome b family. The main subunits of complex b-c1 are: cytochrome b, cytochrome c1 and the Rieske protein. Heme b serves as cofactor.

The protein resides in the mitochondrion inner membrane. Functionally, component of the ubiquinol-cytochrome c reductase complex (complex III or cytochrome b-c1 complex) that is part of the mitochondrial respiratory chain. The b-c1 complex mediates electron transfer from ubiquinol to cytochrome c. Contributes to the generation of a proton gradient across the mitochondrial membrane that is then used for ATP synthesis. The protein is Cytochrome b (MT-CYB) of Samia ricini (Indian eri silkmoth).